The primary structure comprises 520 residues: MNSGPGPVGGRPGGRGGPAVQQNIPSNLLQDHENQRLFELLGRKCWTLATTVVQLYLALPPGAEHWTMEHCGAVCFVKDNPQKSYFIRLYGLQAGRLLWEQELYSQLVYLTPTPFFHTFAGDDCQVGLNFADESEAQAFRALVQEKIQKRNQRQSGERRQLPPPPAPINEERRGGLPPVPPHPGGDHGGPSGGPLSLGLVTVDIQNPDITSSRYRGLPAPGPGPTDKKRSGKKKISKADIGAPSGFKHVSHVGWDPQNGFDVNNLDPDLRSLFSRAGISEAQLTDAETSKLIYDFIEDQGGLEAVRQEMRRQEPLPPPPPPCRGGGGGGGGGGGGGGGGGGQPLRPPVVGSNKGRSGPLPPVPMGGAPPPPTPRGPPPPGRGGPPPPPPPATGRSGPPPPPLPGAGGPPAPPPPPPPPPPPPCPGSGPAPPPLPPTPVSGGSPAPGGGRGALLDQIRQGIQLNKTPGALENSVQQPPAQQSEGLVGALMHVMQKRSRVIHSSDEGEDQTGEDEEDDEWDD.

Residues 1 to 17 are compositionally biased toward gly residues; the sequence is MNSGPGPVGGRPGGRGG. Disordered regions lie at residues 1–23 and 148–247; these read MNSG…VQQN and QKRN…SGFK. One can recognise a WH1 domain in the interval 41–150; that stretch reads LGRKCWTLAT…ALVQEKIQKR (110 aa). The segment covering 203–213 has biased composition (polar residues); it reads DIQNPDITSSR. The CRIB domain occupies 240–253; sequence IGAPSGFKHVSHVG. The residue at position 293 (tyrosine 293) is a Phosphotyrosine. Residues 307–520 form a disordered region; it reads QEMRRQEPLP…EDEEDDEWDD (214 aa). Gly residues predominate over residues 323–342; that stretch reads RGGGGGGGGGGGGGGGGGGQ. 2 GRSGPLPPXP motif repeats span residues 354–363 and 393–402; these read GRSGPLPPVP and GRSGPPPPPL. The segment covering 358 to 437 has biased composition (pro residues); that stretch reads PLPPVPMGGA…PAPPPLPPTP (80 aa). The WH2 domain maps to 448–465; that stretch reads GRGALLDQIRQGIQLNKT. Residues 471–482 show a composition bias toward polar residues; it reads NSVQQPPAQQSE. Serine 501 and serine 502 each carry phosphoserine. Acidic residues predominate over residues 504 to 520; that stretch reads EGEDQTGEDEEDDEWDD.

Binds the Arp2/3 complex. Interacts with CDC42, RAC, NCK, HCK, FYN, SRC kinase FGR, BTK, ABL1, PSTPIP1, WIP, and to the p85 subunit of PLC-gamma. Interacts (via C-terminus) with ALDOA. Interacts with NCK1 (via SH3 domains). Interacts with FCHSD2. In terms of processing, phosphorylated at Tyr-293 by FYN and HCK, inducing WAS effector activity after TCR engagement. Phosphorylation at Tyr-293 enhances WAS activity in promoting actin polymerization and filopodia formation.

It is found in the cytoplasm. It localises to the cytoskeleton. The protein localises to the nucleus. Functionally, effector protein for Rho-type GTPases that regulates actin filament reorganization via its interaction with the Arp2/3 complex. Important for efficient actin polymerization. Possible regulator of lymphocyte and platelet function. Mediates actin filament reorganization and the formation of actin pedestals upon infection by pathogenic bacteria. In addition to its role in the cytoplasmic cytoskeleton, also promotes actin polymerization in the nucleus, thereby regulating gene transcription and repair of damaged DNA. Promotes homologous recombination (HR) repair in response to DNA damage by promoting nuclear actin polymerization, leading to drive motility of double-strand breaks (DSBs). This chain is Actin nucleation-promoting factor WAS (Was), found in Mus musculus (Mouse).